A 181-amino-acid chain; its full sequence is Inner membrane-spanning protein YciB (181 aa).

5 helical membrane-spanning segments follow: residues 10 to 30 (LVIF…GALI), 50 to 70 (MHLI…ILHD), 80 to 100 (IVYA…KPIL), 118 to 138 (VTWY…YVAF), and 148 to 168 (FKVF…VFYL).

It belongs to the YciB family.

The protein resides in the cell inner membrane. In terms of biological role, plays a role in cell envelope biogenesis, maintenance of cell envelope integrity and membrane homeostasis. The sequence is that of Inner membrane-spanning protein YciB from Shewanella piezotolerans (strain WP3 / JCM 13877).